Here is a 251-residue protein sequence, read N- to C-terminus: Duodenase-1 (251 aa).

The N-terminal stretch at 1-17 is a signal peptide; that stretch reads MVLLLLLVALLSPTGEA. Positions 18 to 19 are excised as a propeptide; the sequence is GK. In terms of domain architecture, Peptidase S1 spans 20 to 242; it reads IIGGHEAKPH…SFLSWIHSTM (223 aa). A disulfide bond links Cys-48 and Cys-64. His-63 acts as the Charge relay system in catalysis. Asn-70 carries N-linked (GlcNAc...) asparagine glycosylation. Catalysis depends on Asp-107, which acts as the Charge relay system. Cystine bridges form between Cys-141–Cys-207 and Cys-172–Cys-186. The Charge relay system role is filled by Ser-201.

It belongs to the peptidase S1 family. As to quaternary structure, monomer.

Its function is as follows. Protease which has both trypsin-like and chymotrypsin-like activities. Shows a preferential cleavage after Lys, Arg, Tyr, Phe, and Leu residues. This chain is Duodenase-1 (BDMD1), found in Bos taurus (Bovine).